Here is a 23-residue protein sequence, read N- to C-terminus: Laccase-1 (23 aa).

Belongs to the multicopper oxidase family. Cu cation serves as cofactor.

Its subcellular location is the secreted. The catalysed reaction is 4 hydroquinone + O2 = 4 benzosemiquinone + 2 H2O. Strongly inhibited by sodium azide, sodium cyanide, Li(+), Sn(+), Hg(2+), and the disulfide-reducing agents beta-mercaptoethanol, dithiothreitol and thioglycolic acid. Moderately inhibited by Mn(2+) and Fe(2+), inhibition by these metal ions is stronger at 0.1 mM than at 1 mM. Moderately inhibited by Cu(2+). In terms of biological role, lignin degradation and detoxification of lignin-derived products. Demethylates eucalyptus hard wood lignin. Has high activity against the non-phenolic heterocyclic compound ABTS, and lower activity against the phenolic substrates syringic acid, caffeic acid, syringaldazine, vanillic acid, catechol and levodihydroxyphenylalanine. In Galerina sp, this protein is Laccase-1.